The sequence spans 407 residues: GTPase Obg (407 aa).

The Obg domain occupies 1–159 (MKFVDEVSIR…RDLKMEMKVL (159 aa)). The segment at 127–150 (NTRFKSSTNRAPRQTTPGKPGDQR) is disordered. Polar residues predominate over residues 129–143 (RFKSSTNRAPRQTTP). The 174-residue stretch at 160–333 (ADVGLLGLPN…LSHDLMRYLE (174 aa)) folds into the OBG-type G domain. Residues 166–173 (GLPNAGKS), 191–195 (FTTLV), 213–216 (DIPG), 283–286 (NKAD), and 314–316 (SAI) contribute to the GTP site. The Mg(2+) site is built by serine 173 and threonine 193. A disordered region spans residues 378-407 (VKSVHDIGDDDDWDDFEDDEDGPEIIYVRD). The segment covering 385 to 400 (GDDDDWDDFEDDEDGP) has biased composition (acidic residues).

The protein belongs to the TRAFAC class OBG-HflX-like GTPase superfamily. OBG GTPase family. Monomer. Requires Mg(2+) as cofactor.

The protein resides in the cytoplasm. An essential GTPase which binds GTP, GDP and possibly (p)ppGpp with moderate affinity, with high nucleotide exchange rates and a fairly low GTP hydrolysis rate. Plays a role in control of the cell cycle, stress response, ribosome biogenesis and in those bacteria that undergo differentiation, in morphogenesis control. In Pseudomonas entomophila (strain L48), this protein is GTPase Obg.